The chain runs to 450 residues: Sorting nexin-4 (450 aa).

Residue methionine 1 is modified to N-acetylmethionine. A disordered region spans residues 1-53 (MEQAAPDPERLWQPAPLEPLSHPDAGLESMVGEETKGARDEGPGDGTMTENNF). Over residues 33–42 (EETKGARDEG) the composition is skewed to basic and acidic residues. The 127-residue stretch at 61 to 187 (SVSEAEKRTG…YLFLTQEGNW (127 aa)) folds into the PX domain. 4 residues coordinate a 1,2-diacyl-sn-glycero-3-phospho-(1D-myo-inositol-3-phosphate): arginine 106, serine 108, lysine 132, and arginine 154.

This sequence belongs to the sorting nexin family. Heterodimer; heterodimerizes with SNX7 or SNX30. Interacts with WWC1/KIBRA. Identified in a complex with WWC1/KIBRA and dynein components DYNLL1 and DYNC1I2. Interacts with BIN1.

It is found in the early endosome. The protein localises to the early endosome membrane. In terms of biological role, involved in the regulation of endocytosis and in several stages of intracellular trafficking. Plays a role in recycling endocytosed transferrin receptor and prevent its degradation. Involved in autophagosome assembly by regulating trafficking and recycling of phospholipid scramblase ATG9A. This chain is Sorting nexin-4, found in Bos taurus (Bovine).